We begin with the raw amino-acid sequence, 356 residues long: Carminomycin 4-O-methyltransferase DauK (356 aa).

R153 lines the S-adenosyl-L-methionine pocket. D163 contributes to the substrate binding site. S-adenosyl-L-methionine is bound by residues G187, E210, 237–238 (DF), and S252. Substrate contacts are provided by N257 and R303.

Belongs to the class I-like SAM-binding methyltransferase superfamily. Cation-independent O-methyltransferase family. As to quaternary structure, homodimer and homotetramer in equilibrium.

It catalyses the reaction carminomycin + S-adenosyl-L-methionine = daunorubicin + S-adenosyl-L-homocysteine + H(+). Its pathway is antibiotic biosynthesis; daunorubicin biosynthesis. It participates in antibiotic biosynthesis; carminomycin biosynthesis. Its activity is regulated as follows. Strongly inhibited by S-adenosyl-L-homocysteine and weakly by adenine and methionine. Involved in the biosynthesis of the anthracyclines carminomycin and daunorubicin (daunomycin) which are aromatic polyketide antibiotics that exhibit high cytotoxicity and are widely applied in the chemotherapy of a variety of cancers. In vivo, catalyzes the transfer of a methyl group from S-adenosyl-L-methionine to the 4-O-position of carminomycin to form daunorubicin. In vitro, it also methylates the anthracyclines rhodomycin D (10-carbomethoxy-13-deoxycarminomycin), 10-carboxy-13-deoxycarminomycin, 13-deoxy-carminomycin and 13-dihydrocarminomycin at the 4-hydroxyl position. The polypeptide is Carminomycin 4-O-methyltransferase DauK (dauK) (Streptomyces sp. (strain C5)).